Reading from the N-terminus, the 200-residue chain is MITSIQGTLVSATPLQAIVEVAGFGYEVHIPVTTAERLPAAGAAVKLHTLVIYREDSQTLYGFASPAERDFFRLMIEHVTGVGPKMALSIMSRLALPSLESAIRMGDVASLAKCPGIGKKTAERLVVELRTKVGATGAAPGLATQPAAAASPGASAHRDAVAALVALGYRSADADEAVRRASLALGEAATTESLIKKALS.

The tract at residues 1–64 is domain I; that stretch reads MITSIQGTLV…EDSQTLYGFA (64 aa). Residues 65-144 form a domain II region; sequence SPAERDFFRL…ATGAAPGLAT (80 aa). The flexible linker stretch occupies residues 145–151; sequence QPAAAAS. The segment at 152–200 is domain III; sequence PGASAHRDAVAALVALGYRSADADEAVRRASLALGEAATTESLIKKALS.

This sequence belongs to the RuvA family. As to quaternary structure, homotetramer. Forms an RuvA(8)-RuvB(12)-Holliday junction (HJ) complex. HJ DNA is sandwiched between 2 RuvA tetramers; dsDNA enters through RuvA and exits via RuvB. An RuvB hexamer assembles on each DNA strand where it exits the tetramer. Each RuvB hexamer is contacted by two RuvA subunits (via domain III) on 2 adjacent RuvB subunits; this complex drives branch migration. In the full resolvosome a probable DNA-RuvA(4)-RuvB(12)-RuvC(2) complex forms which resolves the HJ.

It localises to the cytoplasm. Its function is as follows. The RuvA-RuvB-RuvC complex processes Holliday junction (HJ) DNA during genetic recombination and DNA repair, while the RuvA-RuvB complex plays an important role in the rescue of blocked DNA replication forks via replication fork reversal (RFR). RuvA specifically binds to HJ cruciform DNA, conferring on it an open structure. The RuvB hexamer acts as an ATP-dependent pump, pulling dsDNA into and through the RuvAB complex. HJ branch migration allows RuvC to scan DNA until it finds its consensus sequence, where it cleaves and resolves the cruciform DNA. This is Holliday junction branch migration complex subunit RuvA from Opitutus terrae (strain DSM 11246 / JCM 15787 / PB90-1).